Here is a 509-residue protein sequence, read N- to C-terminus: Probable basic-leucine zipper transcription factor H (509 aa).

Residues 1 to 42 are disordered; sequence MMNSPRSLDSSDGSVDSSSVYSGTSSFGSSFTSSTGSGFTNS. Residues 10–39 show a composition bias toward low complexity; that stretch reads SSDGSVDSSSVYSGTSSFGSSFTSSTGSGF. The bZIP domain occupies 50–113; it reads AKKKKIRQMQ…NENYLKINQL (64 aa). Residues 51-77 are basic motif; sequence KKKKIRQMQNRQSAAQYRERKKEYLEK. Positions 78-99 are leucine-zipper; it reads LETIVDNLESDRNQLLQQTKQL. 4 disordered regions span residues 134-185, 223-275, 290-414, and 465-509; these read LLSK…SNNG, FSHL…SRFN, IENV…IINN, and SNNN…GIPK. Low complexity-rich tracts occupy residues 226-248, 255-269, 292-350, 361-414, 465-483, and 490-509; these read LQQQ…SPIP, PIQQ…QNIN, NVNN…SNRS, QQQQ…IINN, SNNN…NSPS, and NGGI…GIPK.

The protein belongs to the bZIP family.

Its subcellular location is the nucleus. Probable transcriptional regulator. The polypeptide is Probable basic-leucine zipper transcription factor H (bzpH) (Dictyostelium discoideum (Social amoeba)).